Here is a 235-residue protein sequence, read N- to C-terminus: Small capsomere-interacting protein (235 aa).

A disordered region spans residues 104-235 (PRIIRPQPPN…SGNASRSRRV (132 aa)). Polar residues predominate over residues 127 to 139 (PQKTQSADQSALQ). A compositionally biased stretch (low complexity) spans 158-188 (TTSASVGQQQHVVSGSSGQQPQQGAQSSTVQ). Residues 220-235 (LSHTGQSGNASRSRRV) are compositionally biased toward polar residues.

The protein belongs to the herpesviridae small capsomere-interacting protein family. As to quaternary structure, interacts with the major capsid protein/MCP.

It localises to the virion. The protein localises to the host nucleus. Its function is as follows. Participates in the assembly of the infectious particles by decorating the outer surface of the capsid shell and thus forming a layer between the capsid and the tegument. Complexes composed of the capsid protein VP5 and VP26 assemble together in the host cytoplasm and are translocated to the nucleus, where they accumulate and participate in capsid assembly. Functionally, participates in the assembly of the infectious particles by decorating the outer surface of the capsid shell and thus forming a layer between the capsid and the tegument. Complexes composed of the major capsid protein and small capsomere-interacting protein/SCP assemble together in the host cytoplasm and are translocated to the nucleus, where they accumulate and participate in capsid assembly. This is Small capsomere-interacting protein from Homo sapiens (Human).